The primary structure comprises 514 residues: MQQLNPSEISALIKQRIGDLDTSATAKNEGTIVMVSDGIVRIHGLADAMYGEMIEFDGGLFGMALNLEQDSVGAVVLGNYLSLQEGQKARCTGRVLEVPVGPELLGRVVDALGNPIDGKGPIDAKLTDAVEKVAPGVIWRQSVDQPVQTGYKSVDTMIPVGRGQRELIIGDRQTGKTAMAIDAIIAQKNSGIKCVYVAIGQKQSTIANVVRKLEETGAMAYTTVVAAAAADPAAMQYLAPYSGCTMGEYFRDRGEDALIIYDDLSKQAVAYRQISLLLRRPPGREAYPGDVFYLHSRLLERASRVSAEYVEKFTNGAVTGKTGSLTALPIIETQAGDVSAFVPTNVISITDGQIFLETSLFNAGIRPAVNAGISVSRVGGSAQTKIIKKLSGGIRTALAQYRELAAFAQFASDLDEATRKQLEHGQRVTELMKQKQYAPYSIADQAVSVYASNEGYMADVEVKKIVDFDAALIAYFRSEYAPLMKQIDETGDYNKDIEAAIKAGIESFKATQTY.

170–177 provides a ligand contact to ATP; that stretch reads GDRQTGKT.

Belongs to the ATPase alpha/beta chains family. F-type ATPases have 2 components, CF(1) - the catalytic core - and CF(0) - the membrane proton channel. CF(1) has five subunits: alpha(3), beta(3), gamma(1), delta(1), epsilon(1). CF(0) has three main subunits: a(1), b(2) and c(9-12). The alpha and beta chains form an alternating ring which encloses part of the gamma chain. CF(1) is attached to CF(0) by a central stalk formed by the gamma and epsilon chains, while a peripheral stalk is formed by the delta and b chains.

It is found in the cell inner membrane. It carries out the reaction ATP + H2O + 4 H(+)(in) = ADP + phosphate + 5 H(+)(out). In terms of biological role, produces ATP from ADP in the presence of a proton gradient across the membrane. The alpha chain is a regulatory subunit. In Acinetobacter baumannii (strain AB307-0294), this protein is ATP synthase subunit alpha.